A 414-amino-acid polypeptide reads, in one-letter code: Gamma-glutamyl phosphate reductase (414 aa).

Belongs to the gamma-glutamyl phosphate reductase family.

It localises to the cytoplasm. The catalysed reaction is L-glutamate 5-semialdehyde + phosphate + NADP(+) = L-glutamyl 5-phosphate + NADPH + H(+). It functions in the pathway amino-acid biosynthesis; L-proline biosynthesis; L-glutamate 5-semialdehyde from L-glutamate: step 2/2. Its function is as follows. Catalyzes the NADPH-dependent reduction of L-glutamate 5-phosphate into L-glutamate 5-semialdehyde and phosphate. The product spontaneously undergoes cyclization to form 1-pyrroline-5-carboxylate. The sequence is that of Gamma-glutamyl phosphate reductase from Xanthomonas oryzae pv. oryzae (strain KACC10331 / KXO85).